Here is a 334-residue protein sequence, read N- to C-terminus: Holliday junction branch migration complex subunit RuvB (334 aa).

A large ATPase domain (RuvB-L) region spans residues 4 to 186 (ADRLIAPENP…FGITQRLEYY (183 aa)). Residues Ile25, Arg26, Gly67, Lys70, Thr71, Thr72, 133-135 (EDY), Arg176, Tyr186, and Arg223 contribute to the ATP site. Thr71 lines the Mg(2+) pocket. The tract at residues 187–257 (KVKDLQDIVQ…TADKALNMLD (71 aa)) is small ATPAse domain (RuvB-S). A head domain (RuvB-H) region spans residues 260 to 334 (AEGFDYMDRK…RAYLHFGIEK (75 aa)). DNA is bound by residues Arg315 and Arg320.

Belongs to the RuvB family. As to quaternary structure, homohexamer. Forms an RuvA(8)-RuvB(12)-Holliday junction (HJ) complex. HJ DNA is sandwiched between 2 RuvA tetramers; dsDNA enters through RuvA and exits via RuvB. An RuvB hexamer assembles on each DNA strand where it exits the tetramer. Each RuvB hexamer is contacted by two RuvA subunits (via domain III) on 2 adjacent RuvB subunits; this complex drives branch migration. In the full resolvosome a probable DNA-RuvA(4)-RuvB(12)-RuvC(2) complex forms which resolves the HJ.

The protein resides in the cytoplasm. It carries out the reaction ATP + H2O = ADP + phosphate + H(+). Its function is as follows. The RuvA-RuvB-RuvC complex processes Holliday junction (HJ) DNA during genetic recombination and DNA repair, while the RuvA-RuvB complex plays an important role in the rescue of blocked DNA replication forks via replication fork reversal (RFR). RuvA specifically binds to HJ cruciform DNA, conferring on it an open structure. The RuvB hexamer acts as an ATP-dependent pump, pulling dsDNA into and through the RuvAB complex. RuvB forms 2 homohexamers on either side of HJ DNA bound by 1 or 2 RuvA tetramers; 4 subunits per hexamer contact DNA at a time. Coordinated motions by a converter formed by DNA-disengaged RuvB subunits stimulates ATP hydrolysis and nucleotide exchange. Immobilization of the converter enables RuvB to convert the ATP-contained energy into a lever motion, pulling 2 nucleotides of DNA out of the RuvA tetramer per ATP hydrolyzed, thus driving DNA branch migration. The RuvB motors rotate together with the DNA substrate, which together with the progressing nucleotide cycle form the mechanistic basis for DNA recombination by continuous HJ branch migration. Branch migration allows RuvC to scan DNA until it finds its consensus sequence, where it cleaves and resolves cruciform DNA. This Vibrio campbellii (strain ATCC BAA-1116) protein is Holliday junction branch migration complex subunit RuvB.